The sequence spans 509 residues: Maturase K (509 aa).

The protein belongs to the intron maturase 2 family. MatK subfamily.

Its subcellular location is the plastid. The protein localises to the chloroplast. In terms of biological role, usually encoded in the trnK tRNA gene intron. Probably assists in splicing its own and other chloroplast group II introns. The chain is Maturase K from Trifolium semipilosum (Kenya clover).